The chain runs to 256 residues: Hydroxyethylthiazole kinase (256 aa).

Met-37 is a binding site for substrate. 2 residues coordinate ATP: Lys-113 and Thr-159. Gly-186 is a substrate binding site.

Belongs to the Thz kinase family. The cofactor is Mg(2+).

The catalysed reaction is 5-(2-hydroxyethyl)-4-methylthiazole + ATP = 4-methyl-5-(2-phosphooxyethyl)-thiazole + ADP + H(+). It functions in the pathway cofactor biosynthesis; thiamine diphosphate biosynthesis; 4-methyl-5-(2-phosphoethyl)-thiazole from 5-(2-hydroxyethyl)-4-methylthiazole: step 1/1. In terms of biological role, catalyzes the phosphorylation of the hydroxyl group of 4-methyl-5-beta-hydroxyethylthiazole (THZ). The protein is Hydroxyethylthiazole kinase of Exiguobacterium sibiricum (strain DSM 17290 / CCUG 55495 / CIP 109462 / JCM 13490 / 255-15).